Consider the following 438-residue polypeptide: ATP synthase subunit alpha, chloroplastic (438 aa).

Position 170–177 (170–177) interacts with ATP; that stretch reads GDRQTGKT.

It belongs to the ATPase alpha/beta chains family. F-type ATPases have 2 components, CF(1) - the catalytic core - and CF(0) - the membrane proton channel. CF(1) has five subunits: alpha(3), beta(3), gamma(1), delta(1), epsilon(1). CF(0) has four main subunits: a, b, b' and c.

It is found in the plastid. Its subcellular location is the chloroplast thylakoid membrane. It carries out the reaction ATP + H2O + 4 H(+)(in) = ADP + phosphate + 5 H(+)(out). Functionally, produces ATP from ADP in the presence of a proton gradient across the membrane. The alpha chain is a regulatory subunit. The polypeptide is ATP synthase subunit alpha, chloroplastic (Ochrosphaera neapolitana).